We begin with the raw amino-acid sequence, 411 residues long: Serine hydroxymethyltransferase (411 aa).

Residue 120–122 coordinates (6S)-5,6,7,8-tetrahydrofolate; that stretch reads GHL. Lysine 225 bears the N6-(pyridoxal phosphate)lysine mark. (6S)-5,6,7,8-tetrahydrofolate contacts are provided by residues glutamate 241 and 350-352; that span reads SPF.

Belongs to the SHMT family. Homodimer. Pyridoxal 5'-phosphate serves as cofactor.

Its subcellular location is the cytoplasm. It carries out the reaction (6R)-5,10-methylene-5,6,7,8-tetrahydrofolate + glycine + H2O = (6S)-5,6,7,8-tetrahydrofolate + L-serine. It functions in the pathway one-carbon metabolism; tetrahydrofolate interconversion. Its pathway is amino-acid biosynthesis; glycine biosynthesis; glycine from L-serine: step 1/1. Catalyzes the reversible interconversion of serine and glycine with tetrahydrofolate (THF) serving as the one-carbon carrier. This reaction serves as the major source of one-carbon groups required for the biosynthesis of purines, thymidylate, methionine, and other important biomolecules. Also exhibits THF-independent aldolase activity toward beta-hydroxyamino acids, producing glycine and aldehydes, via a retro-aldol mechanism. The polypeptide is Serine hydroxymethyltransferase (Limosilactobacillus fermentum (strain NBRC 3956 / LMG 18251) (Lactobacillus fermentum)).